A 462-amino-acid polypeptide reads, in one-letter code: Arginine biosynthesis bifunctional protein ArgJ, mitochondrial (462 aa).

Substrate is bound by residues T200, K228, T239, E326, N457, and T462. The active-site Nucleophile is the T239.

This sequence belongs to the ArgJ family. In terms of assembly, heterodimer of an alpha and a beta chain. In terms of processing, the alpha and beta chains are autoproteolytically processed from a single precursor protein within the mitochondrion.

It is found in the mitochondrion matrix. The enzyme catalyses N(2)-acetyl-L-ornithine + L-glutamate = N-acetyl-L-glutamate + L-ornithine. It catalyses the reaction L-glutamate + acetyl-CoA = N-acetyl-L-glutamate + CoA + H(+). It functions in the pathway amino-acid biosynthesis; L-arginine biosynthesis; L-ornithine and N-acetyl-L-glutamate from L-glutamate and N(2)-acetyl-L-ornithine (cyclic): step 1/1. The protein operates within amino-acid biosynthesis; L-arginine biosynthesis; N(2)-acetyl-L-ornithine from L-glutamate: step 1/4. Catalyzes two activities which are involved in the cyclic version of arginine biosynthesis: the synthesis of acetylglutamate from glutamate and acetyl-CoA, and of ornithine by transacetylation between acetylornithine and glutamate. The chain is Arginine biosynthesis bifunctional protein ArgJ, mitochondrial from Pyrenophora tritici-repentis (strain Pt-1C-BFP) (Wheat tan spot fungus).